A 478-amino-acid polypeptide reads, in one-letter code: UDP-N-acetylmuramate--L-alanine ligase (478 aa).

An ATP-binding site is contributed by 126–132 (GTHGKTT).

Belongs to the MurCDEF family.

Its subcellular location is the cytoplasm. It catalyses the reaction UDP-N-acetyl-alpha-D-muramate + L-alanine + ATP = UDP-N-acetyl-alpha-D-muramoyl-L-alanine + ADP + phosphate + H(+). It functions in the pathway cell wall biogenesis; peptidoglycan biosynthesis. Cell wall formation. The polypeptide is UDP-N-acetylmuramate--L-alanine ligase (Synechococcus sp. (strain JA-2-3B'a(2-13)) (Cyanobacteria bacterium Yellowstone B-Prime)).